The following is a 773-amino-acid chain: E3 ubiquitin-protein ligase RFWD3 (773 aa).

Disordered regions lie at residues 18 to 67 (VAEQ…SQVG), 92 to 117 (RVENINPGASEEHRQPSRVNRPIPVS), 139 to 230 (LRPP…EEVV), and 259 to 279 (GETLPKQSPQKTNPLLPSVSK). Position 47 is a phosphoserine; by ATM and ATR (Ser47). Residues 50–59 (APPLLQPAPA) show a composition bias toward low complexity. A Phosphoserine; by ATM and ATR modification is found at Ser64. Over residues 151 to 164 (RSRRRRGSASRRSR) the composition is skewed to basic residues. Residues 186-205 (VSRTQPHLPSMSQDSETRNP) are compositionally biased toward polar residues. The segment covering 207–221 (SEDLQVSSSSSSDSE) has biased composition (low complexity). The span at 263–273 (PKQSPQKTNPL) shows a compositional bias: polar residues. The segment at 287-331 (CTICFEHWTNAGDHRLSALRCGHLFGYKCISKWLKGQARKCPQCN) adopts an RING-type; degenerate zinc-finger fold. A coiled-coil region spans residues 361 to 403 (SLLKEQMLRKQAELESAQCRLQLQVLTDECSKLHSRVQDLQKL). WD repeat units follow at residues 494 to 536 (MHGK…QTYN), 538 to 576 (GRPVWSCCWCLDESNHIYAGLVNGSILVYDLRNTSSHIQ), and 582 to 627 (KARC…SHWP).

In terms of assembly, interacts with MDM2 and p53/TP53. Binds to the RPA complex via direct interaction with RPA2. Interacts with RAD51. In terms of processing, phosphorylated at Ser-46 and Ser-63 upon DNA damage by ATM or ATR. ATM phosphorylation occurs at early times upon DNA damage, while ATR is the major kinase at later times. Phosphorylation by ATM and ATR is required to stabilize p53/TP53. Part of the phosphorylation depends upon RPA2 presence.

Its subcellular location is the nucleus. The protein resides in the PML body. The protein localises to the cytoplasm. The enzyme catalyses S-ubiquitinyl-[E2 ubiquitin-conjugating enzyme]-L-cysteine + [acceptor protein]-L-lysine = [E2 ubiquitin-conjugating enzyme]-L-cysteine + N(6)-ubiquitinyl-[acceptor protein]-L-lysine.. It functions in the pathway protein modification; protein ubiquitination. In terms of biological role, E3 ubiquitin-protein ligase required for the repair of DNA interstrand cross-links (ICL) in response to DNA damage. Plays a key role in RPA-mediated DNA damage signaling and repair. Acts by mediating ubiquitination of the RPA complex (RPA1, RPA2 and RPA3 subunits) and RAD51 at stalled replication forks, leading to remove them from DNA damage sites and promote homologous recombination. Also mediates the ubiquitination of p53/TP53 in the late response to DNA damage, and acts as a positive regulator of p53/TP53 stability, thereby regulating the G1/S DNA damage checkpoint. May act by catalyzing the formation of short polyubiquitin chains on p53/TP53 that are not targeted to the proteasome. In response to ionizing radiation, interacts with MDM2 and enhances p53/TP53 ubiquitination, possibly by restricting MDM2 from extending polyubiquitin chains on ubiquitinated p53/TP53. Required to translesion DNA synthesis across DNA-protein cross-link adducts by catalyzing ubiquitination of proteins on single-stranded DNA (ssDNA). The chain is E3 ubiquitin-protein ligase RFWD3 (RFWD3) from Ailuropoda melanoleuca (Giant panda).